Reading from the N-terminus, the 648-residue chain is Biosynthetic arginine decarboxylase (648 aa).

At lysine 109 the chain carries N6-(pyridoxal phosphate)lysine. 291–301 (IDVGGGLGIDF) contacts substrate.

It belongs to the Orn/Lys/Arg decarboxylase class-II family. SpeA subfamily. The cofactor is Mg(2+). Requires pyridoxal 5'-phosphate as cofactor.

It catalyses the reaction L-arginine + H(+) = agmatine + CO2. The protein operates within amine and polyamine biosynthesis; agmatine biosynthesis; agmatine from L-arginine: step 1/1. Its function is as follows. Catalyzes the biosynthesis of agmatine from arginine. The sequence is that of Biosynthetic arginine decarboxylase from Prochlorococcus marinus (strain AS9601).